Reading from the N-terminus, the 368-residue chain is Isocitrate dehydrogenase [NAD] subunit 2, mitochondrial (368 aa).

Residues 1–14 (MFRQSIVKQSCRFL) constitute a mitochondrion transit peptide. The substrate site is built by R118, R128, R149, and D236. Mg(2+) contacts are provided by D236, D262, and D266.

Belongs to the isocitrate and isopropylmalate dehydrogenases family. As to quaternary structure, octamer of two non-identical subunits IDH1 and IDH2. It depends on Mg(2+) as a cofactor. The cofactor is Mn(2+).

It is found in the mitochondrion. The enzyme catalyses D-threo-isocitrate + NAD(+) = 2-oxoglutarate + CO2 + NADH. Performs an essential role in the oxidative function of the citric acid cycle. This Kluyveromyces lactis (strain ATCC 8585 / CBS 2359 / DSM 70799 / NBRC 1267 / NRRL Y-1140 / WM37) (Yeast) protein is Isocitrate dehydrogenase [NAD] subunit 2, mitochondrial (IDH2).